The chain runs to 366 residues: DNA-directed RNA polymerase subunit alpha (366 aa).

The tract at residues 1–260 (MAISDNGGGS…DQLQSFIGSE (260 aa)) is alpha N-terminal domain (alpha-NTD). Residues 274–366 (EGALPYDHNL…ENLSKQYSED (93 aa)) form an alpha C-terminal domain (alpha-CTD) region.

Belongs to the RNA polymerase alpha chain family. Homodimer. The RNAP catalytic core consists of 2 alpha, 1 beta, 1 beta' and 1 omega subunit. When a sigma factor is associated with the core the holoenzyme is formed, which can initiate transcription.

The enzyme catalyses RNA(n) + a ribonucleoside 5'-triphosphate = RNA(n+1) + diphosphate. DNA-dependent RNA polymerase catalyzes the transcription of DNA into RNA using the four ribonucleoside triphosphates as substrates. In Anaplasma marginale (strain St. Maries), this protein is DNA-directed RNA polymerase subunit alpha.